The sequence spans 124 residues: Small ribosomal subunit protein uS12 (124 aa).

Asp-89 carries the 3-methylthioaspartic acid modification. A disordered region spans residues 105 to 124 (QGVKNRKQARSRYGAKKEKS). Basic residues predominate over residues 108 to 118 (KNRKQARSRYG).

Belongs to the universal ribosomal protein uS12 family. In terms of assembly, part of the 30S ribosomal subunit. Contacts proteins S8 and S17. May interact with IF1 in the 30S initiation complex.

Its function is as follows. With S4 and S5 plays an important role in translational accuracy. Functionally, interacts with and stabilizes bases of the 16S rRNA that are involved in tRNA selection in the A site and with the mRNA backbone. Located at the interface of the 30S and 50S subunits, it traverses the body of the 30S subunit contacting proteins on the other side and probably holding the rRNA structure together. The combined cluster of proteins S8, S12 and S17 appears to hold together the shoulder and platform of the 30S subunit. The polypeptide is Small ribosomal subunit protein uS12 (Mycobacteroides abscessus (strain ATCC 19977 / DSM 44196 / CCUG 20993 / CIP 104536 / JCM 13569 / NCTC 13031 / TMC 1543 / L948) (Mycobacterium abscessus)).